The chain runs to 515 residues: Recombining binding protein suppressor of hairless-like protein (515 aa).

The disordered stretch occupies residues 1–40 (MDPRETTDPSLPPGPLTHLSLPDSSEVRLQSDGPSLLGSW). 3 DNA-binding regions span residues 76–86 (QKSYGNEKRFF), 191–196 (SKPSQK), and 218–223 (RLRSQT). The IPT/TIG domain occupies 384-474 (PLISTLELSG…YPSPFSFTYT (91 aa)).

It belongs to the Su(H) family. Interacts weakly with EBNA2. Does not interact with any Notch proteins. Highly expressed in lung. Also detected in spleen, and brain.

It localises to the nucleus. In terms of biological role, putative transcription factor, which cooperates with EBNA2 to activate transcription. This is Recombining binding protein suppressor of hairless-like protein (Rbpjl) from Mus musculus (Mouse).